Reading from the N-terminus, the 434-residue chain is Glutamate-1-semialdehyde 2,1-aminomutase 1 (434 aa).

Lys-270 carries the post-translational modification N6-(pyridoxal phosphate)lysine.

This sequence belongs to the class-III pyridoxal-phosphate-dependent aminotransferase family. HemL subfamily. As to quaternary structure, homodimer. The cofactor is pyridoxal 5'-phosphate.

The protein resides in the cytoplasm. The catalysed reaction is (S)-4-amino-5-oxopentanoate = 5-aminolevulinate. The protein operates within porphyrin-containing compound metabolism; protoporphyrin-IX biosynthesis; 5-aminolevulinate from L-glutamyl-tRNA(Glu): step 2/2. The protein is Glutamate-1-semialdehyde 2,1-aminomutase 1 of Bacillus anthracis (strain A0248).